The sequence spans 55 residues: Large ribosomal subunit protein bL33 (55 aa).

Belongs to the bacterial ribosomal protein bL33 family.

This is Large ribosomal subunit protein bL33 from Rhizobium etli (strain CIAT 652).